The chain runs to 632 residues: Gamma-aminobutyric acid receptor subunit theta (632 aa).

The signal sequence occupies residues 1 to 21 (MGIRGMLRAAVILLLIRTWLA). The Extracellular segment spans residues 22-268 (EGNYPSPIPK…FQVQREVNSY (247 aa)). A glycan (N-linked (GlcNAc...) asparagine) is linked at asparagine 127. A disulfide bridge links cysteine 183 with cysteine 197. A helical membrane pass occupies residues 269–289 (LVQVYWPTVLTTITSWISFWM). Residues 290-297 (NYDSSAAR) are Cytoplasmic-facing. A helical transmembrane segment spans residues 298 to 315 (VTIGLTSMLILTTIDSHL). At 316 to 326 (RDKLPNISCIK) the chain is on the extracellular side. Residues 327 to 347 (AIDIYILVCLFFVFLSLLEYV) form a helical membrane-spanning segment. Over 348–611 (YINYLFYSRG…DYVPKVDKWS (264 aa)) the chain is Cytoplasmic. Disordered stretches follow at residues 410–458 (SPES…STSE) and 491–523 (HGVT…LHHG). Positions 413–425 (SLGSLTSTSEQAQ) are enriched in polar residues. Residues 426 to 439 (LATSESLSPLTSLS) show a composition bias toward low complexity. A compositionally biased stretch (polar residues) spans 448–458 (ESLSDLPSTSE). The span at 491-511 (HGVTHDHEDSNESLSSDERHG) shows a compositional bias: basic and acidic residues. The chain crosses the membrane as a helical span at residues 612-632 (RFLFPLAFGLFNIVYWVYHMY).

The protein belongs to the ligand-gated ion channel (TC 1.A.9) family. Gamma-aminobutyric acid receptor (TC 1.A.9.5) subfamily. GABRQ sub-subfamily. In terms of assembly, heteropentamer, formed by a combination of alpha (GABRA1-6), beta (GABRB1-3), gamma (GABRG1-3), delta (GABRD), epsilon (GABRE), rho (GABRR1-3), pi (GABRP) and theta (GABRQ) chains, each subunit exhibiting distinct physiological and pharmacological properties. As to expression, expressed in brain.

It localises to the postsynaptic cell membrane. The protein resides in the cell membrane. It carries out the reaction chloride(in) = chloride(out). Its activity is regulated as follows. Potentiated by etomidate, propofol, pregnanolone and pentobarbital. Functionally, theta subunit of the heteropentameric ligand-gated chloride channel gated by gamma-aminobutyric acid (GABA), a major inhibitory neurotransmitter in the brain. GABA-gated chloride channels, also named GABA(A) receptors (GABAAR), consist of five subunits arranged around a central pore and contain GABA active binding site(s) located at the alpha and beta subunit interfaces. When activated by GABA, GABAARs selectively allow the flow of chloride anions across the cell membrane down their electrochemical gradient. This Homo sapiens (Human) protein is Gamma-aminobutyric acid receptor subunit theta.